We begin with the raw amino-acid sequence, 188 residues long: Murein DD-endopeptidase MepS/Murein LD-carboxypeptidase (188 aa).

A signal peptide spans 1–26; sequence MVKSQPILRYILRGIPAIAVAVLLSA. Cys-27 carries the N-palmitoyl cysteine lipid modification. Cys-27 carries the S-diacylglycerol cysteine lipid modification. In terms of domain architecture, NlpC/P60 spans 64 to 185; that stretch reads VDVKSRIMDQ…KRYNEARRVL (122 aa). The Nucleophile role is filled by Cys-94. Residue His-145 is the Proton acceptor of the active site. His-157 is a catalytic residue.

It belongs to the peptidase C40 family. Monomer.

It localises to the cell outer membrane. The enzyme catalyses N-acetyl-D-glucosaminyl-N-acetylmuramoyl-L-alanyl-meso-2,6-diaminoheptanedioyl-D-alanine + H2O = N-acetyl-D-glucosaminyl-N-acetylmuramoyl-L-alanyl-meso-2,6-diaminoheptanedioate + D-alanine. It functions in the pathway cell wall biogenesis; cell wall polysaccharide biosynthesis. A murein DD-endopeptidase with specificity for D-Ala-meso-diaminopimelic acid (mDAP) cross-links. Its role is probably to cleave D-Ala-mDAP cross-links to allow insertion of new glycans and thus cell wall expansion. Functionally redundant with MepM and MepH. Also has weak LD-carboxypeptidase activity on L-mDAP-D-Ala peptide bonds. The sequence is that of Murein DD-endopeptidase MepS/Murein LD-carboxypeptidase (mepS) from Escherichia coli O157:H7.